The chain runs to 361 residues: AP2/ERF and B3 domain-containing transcription repressor TEM1 (361 aa).

The disordered stretch occupies residues methionine 1 to lysine 73. Residues serine 9–threonine 27 show a composition bias toward low complexity. Residues lysine 71 to lysine 126 constitute a DNA-binding region (AP2/ERF). Residues phenylalanine 195–serine 306 constitute a DNA-binding region (TF-B3).

It belongs to the AP2/ERF transcription factor family. RAV subfamily. In terms of assembly, interacts with FT. Expressed in leaves.

The protein resides in the nucleus. Its function is as follows. Transcriptional repressor of flowering time on long day plants. Acts directly on FT expression by binding 5'-CAACA-3' and 5'-CACCTG-3 sequences. Functionally redundant with TEM2. The sequence is that of AP2/ERF and B3 domain-containing transcription repressor TEM1 (TEM1) from Arabidopsis thaliana (Mouse-ear cress).